The primary structure comprises 1582 residues: Nik-related protein kinase (1582 aa).

The region spanning 25–313 (FSLDKTIGLG…SANMLQHPFV (289 aa)) is the Protein kinase domain. ATP contacts are provided by residues 31 to 39 (IGLGTYGRI) and lysine 54. Aspartate 177 acts as the Proton acceptor in catalysis. 3 stretches are compositionally biased toward low complexity: residues 492 to 507 (QVQS…QTQT), 527 to 538 (PEQQRQGQAPEQ), and 551 to 572 (EQNQ…AQAE). Residues 492–579 (QVQSQVSKKQ…QAETEAEEPE (88 aa)) are disordered. The stretch at 725-759 (QRRQRRWEDIFNQHEEELRQVDKDKEDESSDNDEV) forms a coiled coil. Disordered stretches follow at residues 783–859 (EVQE…PPYS) and 926–1156 (ASAD…GSGM). Composition is skewed to polar residues over residues 803-814 (FSSSVPQRSLLE), 825-834 (RSSQNRQNWL), and 850-859 (RRSQSSPPYS). Serine 852 and serine 855 each carry phosphoserine. Acidic residues predominate over residues 926–944 (ASADTDGDDDDESNDTFED). Basic and acidic residues-rich tracts occupy residues 965–978 (VCKD…KFVD) and 999–1016 (GSCK…EEAY). Residues serine 1027, serine 1031, and serine 1034 each carry the phosphoserine modification. Basic and acidic residues-rich tracts occupy residues 1043–1061 (QEEH…EGDG) and 1125–1135 (PDHESDNKDIS). The span at 1136-1154 (ESSTQSDFSANHSSPSKGS) shows a compositional bias: polar residues. The 344-residue stretch at 1209 to 1552 (TSEICCGSLW…RFLCTRGDKL (344 aa)) folds into the CNH domain.

It belongs to the protein kinase superfamily. STE Ser/Thr protein kinase family. STE20 subfamily.

The enzyme catalyses L-seryl-[protein] + ATP = O-phospho-L-seryl-[protein] + ADP + H(+). It catalyses the reaction L-threonyl-[protein] + ATP = O-phospho-L-threonyl-[protein] + ADP + H(+). Functionally, may phosphorylate cofilin-1 and induce actin polymerization through this process, during the late stages of embryogenesis. Involved in the TNF-alpha-induced signaling pathway. This is Nik-related protein kinase (NRK) from Homo sapiens (Human).